We begin with the raw amino-acid sequence, 91 residues long: Small ribosomal subunit protein uS19 (91 aa).

Belongs to the universal ribosomal protein uS19 family.

Protein S19 forms a complex with S13 that binds strongly to the 16S ribosomal RNA. The protein is Small ribosomal subunit protein uS19 of Paraburkholderia phymatum (strain DSM 17167 / CIP 108236 / LMG 21445 / STM815) (Burkholderia phymatum).